A 175-amino-acid chain; its full sequence is MSGTGSAGMARGLRVDGLPPLPKSLSGLLHSAAGGAAGGWRHLERLYAQKSRIQDELNRGGAGGGGARAAGMRTKPPNLDAALALLRKEMVGLRQLDMSLLCQLYSLYESIQEYKGACQAASSLDCTYALENGFFDDEEDFQEQGSLQDGQHHGSPRDQSPLTHLSSSDWILESI.

The tract at residues 141–175 (FQEQGSLQDGQHHGSPRDQSPLTHLSSSDWILESI) is disordered. A compositionally biased stretch (polar residues) spans 157–169 (RDQSPLTHLSSSD).

It belongs to the FAM89 family.

The chain is Protein FAM89A (Fam89a) from Mus musculus (Mouse).